The primary structure comprises 304 residues: Non-specific ribonucleoside hydrolase RihC (304 aa).

The active site involves H233.

The protein belongs to the IUNH family. RihC subfamily.

In terms of biological role, hydrolyzes both purine and pyrimidine ribonucleosides with a broad-substrate specificity. This chain is Non-specific ribonucleoside hydrolase RihC, found in Escherichia coli O17:K52:H18 (strain UMN026 / ExPEC).